Reading from the N-terminus, the 150-residue chain is Protein NrdI (150 aa).

The protein belongs to the NrdI family.

Its function is as follows. Probably involved in ribonucleotide reductase function. The sequence is that of Protein NrdI from Mycobacterium avium (strain 104).